The following is a 267-amino-acid chain: Glutamate racemase (267 aa).

Substrate is bound by residues 10–11 (DS) and 42–43 (YG). Catalysis depends on cysteine 73, which acts as the Proton donor/acceptor. Residue 74–75 (NT) coordinates substrate. Cysteine 183 serves as the catalytic Proton donor/acceptor. A substrate-binding site is contributed by 184–185 (TH).

This sequence belongs to the aspartate/glutamate racemases family.

It catalyses the reaction L-glutamate = D-glutamate. Its pathway is cell wall biogenesis; peptidoglycan biosynthesis. In terms of biological role, provides the (R)-glutamate required for cell wall biosynthesis. The chain is Glutamate racemase from Lactobacillus acidophilus (strain ATCC 700396 / NCK56 / N2 / NCFM).